A 179-amino-acid chain; its full sequence is Replication restart protein DnaT (179 aa).

Residues 156–179 form a disordered region; that stretch reads GGLPKRDVNTVSEPDSQIPPGFRG.

This sequence belongs to the DnaT family. In terms of assembly, homooligomerizes. Interacts with PriB. Component of the replication restart primosome. Primosome assembly occurs via a 'hand-off' mechanism. PriA binds to replication forks, subsequently PriB then DnaT bind; DnaT then displaces ssDNA to generate the helicase loading substrate.

Functionally, involved in the restart of stalled replication forks, which reloads the replicative helicase on sites other than the origin of replication. Can function in multiple replication restart pathways. Displaces ssDNA from a PriB-ssDNA complex. Probably forms a spiral filament on ssDNA. This Shigella dysenteriae serotype 1 (strain Sd197) protein is Replication restart protein DnaT.